Here is a 435-residue protein sequence, read N- to C-terminus: Mitochondrial association factor 1 form b0 (435 aa).

The N-terminal stretch at 1–27 (MWRIWRCRLSFLFVTGCLLGALTAGLG) is a signal peptide. The Vacuolar portion of the chain corresponds to 28-96 (SQMSDSVGRN…VTARRRRNRR (69 aa)). A disordered region spans residues 43 to 89 (GVADASQEAGDVVEERTERTEEQVFAPGPPRRHSSESLFPRNPSVTA). Positions 55 to 64 (VEERTERTEE) are enriched in basic and acidic residues. The chain crosses the membrane as a helical span at residues 97 to 117 (ITLIATAVGVAVILAALYVLR). Over 118–435 (RRRAQPPQEP…ESTYLASMLD (318 aa)) the chain is Cytoplasmic. The segment at 120 to 162 (RAQPPQEPEPPTRLRTPRPRAPSGQQQPSESEPPAGVPMKPGS) is disordered.

Its subcellular location is the parasitophorous vacuole membrane. During host cell infection by tachyzoites, does not play a role in tethering the parasitophorous vacuole to the host mitochondria. This Toxoplasma gondii protein is Mitochondrial association factor 1 form b0.